We begin with the raw amino-acid sequence, 142 residues long: Baculoviral IAP repeat-containing protein 5 (142 aa).

One copy of the BIR repeat lies at 18 to 88 (RISTFKNWPF…KHSSGCAFLS (71 aa)). Ser-20 is subject to Phosphoserine; by AURKC. Lys-23 bears the N6-acetyllysine mark. Thr-34 carries the phosphothreonine; by CDK1 and CDK15 modification. Thr-48 is modified (phosphothreonine). The Zn(2+) site is built by Cys-57, Cys-60, His-77, and Cys-84. Lys-90, Lys-110, Lys-112, and Lys-115 each carry N6-acetyllysine. Thr-117 carries the phosphothreonine; by AURKB modification. At Lys-129 the chain carries N6-acetyllysine.

The protein belongs to the IAP family. Monomer or homodimer. Exists as a homodimer in the apo state and as a monomer in the CPC-bound state. The monomer protects cells against apoptosis more efficiently than the dimer. Only the dimeric form is capable of enhancing tubulin stability in cells. When phosphorylated, interacts with LAMTOR5/HBXIP; the resulting complex binds pro-CASP9, as well as active CASP9, but much less efficiently. Component of the chromosomal passenger complex (CPC) composed of at least BIRC5/survivin, CDCA8/borealin, INCENP, AURKB or AURKC; in the complex forms a triple-helix bundle-based subcomplex with INCENP and CDCA8. Interacts with JTB. Interacts (via BIR domain) with histone H3 phosphorylated at 'Thr-3' (H3pT3). Interacts with EVI5. Interacts with GTP-bound RAN in both the S and M phases of the cell cycle. Interacts with USP9X. Interacts with tubulin. Interacts with BIRC2/c-IAP1. The acetylated form at Lys-129 interacts with STAT3. The monomeric form deacetylated at Lys-129 interacts with XPO1/CRM1. The monomeric form interacts with XIAP/BIRC4. Both the dimeric and monomeric form can interact with DIABLO/SMAC. Interacts with BIRC6/bruce. Interacts with FBXL7; this interaction facilitates the polyubiquitination and subsequent proteasomal degradation of BIRC5 by the SCF(FBXL7) E3 ubiquitin-protein ligase complex. In terms of processing, ubiquitinated by the Cul9-RING ubiquitin-protein ligase complex, leading to its degradation. Ubiquitination is required for centrosomal targeting. Deubiquitinated by USP35 or USP38; leading to stabilization. Acetylation at Lys-129 results in its homodimerization, while deacetylation promotes the formation of monomers which heterodimerize with XPO1/CRM1 which facilitates its nuclear export. The acetylated form represses STAT3 transactivation. The dynamic equilibrium between its acetylation and deacetylation at Lys-129 determines its interaction with XPO1/CRM1, its subsequent subcellular localization, and its ability to inhibit STAT3 transactivation. Post-translationally, in vitro phosphorylation at Thr-117 by AURKB prevents interaction with INCENP and localization to mitotic chromosomes. Phosphorylation at Thr-48 by CK2 is critical for its mitotic and anti-apoptotic activities. Phosphorylation at Thr-34 by CDK15 is critical for its anti-apoptotic activity. Phosphorylation at Ser-20 by AURKC is critical for regulation of proper chromosome alignment and segregation, and possibly cytokinesis.

It localises to the cytoplasm. Its subcellular location is the nucleus. The protein resides in the chromosome. It is found in the centromere. The protein localises to the cytoskeleton. It localises to the spindle. Its subcellular location is the kinetochore. The protein resides in the midbody. Its function is as follows. Multitasking protein that has dual roles in promoting cell proliferation and preventing apoptosis. Component of a chromosome passage protein complex (CPC) which is essential for chromosome alignment and segregation during mitosis and cytokinesis. Acts as an important regulator of the localization of this complex; directs CPC movement to different locations from the inner centromere during prometaphase to midbody during cytokinesis and participates in the organization of the center spindle by associating with polymerized microtubules. Involved in the recruitment of CPC to centromeres during early mitosis via association with histone H3 phosphorylated at 'Thr-3' (H3pT3) during mitosis. The complex with RAN plays a role in mitotic spindle formation by serving as a physical scaffold to help deliver the RAN effector molecule TPX2 to microtubules. May counteract a default induction of apoptosis in G2/M phase. The acetylated form represses STAT3 transactivation of target gene promoters. May play a role in neoplasia. Inhibitor of CASP3 and CASP7. Essential for the maintenance of mitochondrial integrity and function. The polypeptide is Baculoviral IAP repeat-containing protein 5 (BIRC5) (Felis catus (Cat)).